The following is a 492-amino-acid chain: MEFGVLLLLTLTVGFLLFLVSQSQPKTHGHLPPGPRPLPFLGNLLQMNRRGFLNSFMQLQEKYGDVFTVHLGPRPVVILCGTDTIREALVDQAEAFSGRGTVAVLHPVVQGYGVIFATGERWKTLRRFSLVTMKEFGMGKRSVDERIKEEAQCLVEELKKYKGAPLNPTFLFQSIAANTICSIVFGERFDYKDHQFLHLLDLVYKTSVLMGSLSSQVFELYSGFLKYFPGAHKQIFKNLQEMLNYIGHIVEKHRATLDPSAPRDFIDTYLLRMEKEKSNHHTEFNHQNLVISVLSLFFAGTETTSTTLRCTFLIMLKYPHVAEKVQKEIDQVIGSHRLPTPDDRTKMPYTDAVIHEIQRFADLTPIGLPHRVTKDTVFRGYLLPKNTEVYPILSSALHDPRYFEQPDTFNPEHFLDANGALKKSEAFLPFSTGKRICLGEGIARNELFIFFTAILQNFTLASPVAPEDIDLTPINIGVGKIPSPYQINFLSR.

S129 carries the post-translational modification Phosphoserine. C437 contacts heme.

This sequence belongs to the cytochrome P450 family. Heme is required as a cofactor. In terms of tissue distribution, preputial gland, but not in liver.

It is found in the endoplasmic reticulum membrane. The protein localises to the microsome membrane. The enzyme catalyses an organic molecule + reduced [NADPH--hemoprotein reductase] + O2 = an alcohol + oxidized [NADPH--hemoprotein reductase] + H2O + H(+). Its function is as follows. Cytochromes P450 are a group of heme-thiolate monooxygenases. In liver microsomes, this enzyme is involved in an NADPH-dependent electron transport pathway. This isozyme seems responsible for metabolism of 2,2',4,4',5,5'-hexachlorobiphenyl. The chain is Cytochrome P450 2B12 (Cyp2b12) from Rattus norvegicus (Rat).